Consider the following 585-residue polypeptide: A-type ATP synthase subunit A (585 aa).

Position 235–242 (235–242 (GPFGSGKT)) interacts with ATP.

This sequence belongs to the ATPase alpha/beta chains family. As to quaternary structure, has multiple subunits with at least A(3), B(3), C, D, E, F, H, I and proteolipid K(x).

It localises to the cell membrane. The enzyme catalyses ATP + H2O + 4 H(+)(in) = ADP + phosphate + 5 H(+)(out). Component of the A-type ATP synthase that produces ATP from ADP in the presence of a proton gradient across the membrane. The A chain is the catalytic subunit. The protein is A-type ATP synthase subunit A of Halobacterium salinarum (strain ATCC 29341 / DSM 671 / R1).